A 413-amino-acid polypeptide reads, in one-letter code: Multifunctional CCA protein (413 aa).

Gly-8 and Arg-11 together coordinate ATP. Positions 8 and 11 each coordinate CTP. Mg(2+) contacts are provided by Asp-21 and Asp-23. Arg-91, Arg-143, and Arg-146 together coordinate ATP. Positions 91, 143, and 146 each coordinate CTP. The HD domain occupies 232–333; it reads TGVHVMMVVD…VRLFERSDAL (102 aa).

Belongs to the tRNA nucleotidyltransferase/poly(A) polymerase family. Bacterial CCA-adding enzyme type 1 subfamily. As to quaternary structure, monomer. Can also form homodimers and oligomers. Mg(2+) is required as a cofactor. It depends on Ni(2+) as a cofactor.

It catalyses the reaction a tRNA precursor + 2 CTP + ATP = a tRNA with a 3' CCA end + 3 diphosphate. The catalysed reaction is a tRNA with a 3' CCA end + 2 CTP + ATP = a tRNA with a 3' CCACCA end + 3 diphosphate. Its function is as follows. Catalyzes the addition and repair of the essential 3'-terminal CCA sequence in tRNAs without using a nucleic acid template. Adds these three nucleotides in the order of C, C, and A to the tRNA nucleotide-73, using CTP and ATP as substrates and producing inorganic pyrophosphate. tRNA 3'-terminal CCA addition is required both for tRNA processing and repair. Also involved in tRNA surveillance by mediating tandem CCA addition to generate a CCACCA at the 3' terminus of unstable tRNAs. While stable tRNAs receive only 3'-terminal CCA, unstable tRNAs are marked with CCACCA and rapidly degraded. This Burkholderia lata (strain ATCC 17760 / DSM 23089 / LMG 22485 / NCIMB 9086 / R18194 / 383) protein is Multifunctional CCA protein.